Consider the following 241-residue polypeptide: MNVSRPSGRQADALRPVRIERAFTCHAEGSVLVSFGNTLVVCTASVEAKVPVFLRNKGEGWVTAEYGMLPRSTHTRSEREAARGKQAGRTLEIQRLIGRALRTCVDRTALGERTITLDCDVLQADGGTRTAAITGAYVALVDAVRCLEQRGQLKKSPLIGAVAAVSVGIYRGMPVLDLDYPEDSDCDTDMNVVMNDEGGVIELQGTAEQQAFRRGELDMLLALAERGTAMLFDIQREALAR.

Phosphate is bound by residues arginine 89 and 127 to 129 (GTR).

The protein belongs to the RNase PH family. In terms of assembly, homohexameric ring arranged as a trimer of dimers.

The enzyme catalyses tRNA(n+1) + phosphate = tRNA(n) + a ribonucleoside 5'-diphosphate. Its function is as follows. Phosphorolytic 3'-5' exoribonuclease that plays an important role in tRNA 3'-end maturation. Removes nucleotide residues following the 3'-CCA terminus of tRNAs; can also add nucleotides to the ends of RNA molecules by using nucleoside diphosphates as substrates, but this may not be physiologically important. Probably plays a role in initiation of 16S rRNA degradation (leading to ribosome degradation) during starvation. This chain is Ribonuclease PH, found in Xylella fastidiosa (strain 9a5c).